The sequence spans 213 residues: ATP phosphoribosyltransferase (213 aa).

This sequence belongs to the ATP phosphoribosyltransferase family. Short subfamily. As to quaternary structure, heteromultimer composed of HisG and HisZ subunits.

The protein resides in the cytoplasm. It catalyses the reaction 1-(5-phospho-beta-D-ribosyl)-ATP + diphosphate = 5-phospho-alpha-D-ribose 1-diphosphate + ATP. Its pathway is amino-acid biosynthesis; L-histidine biosynthesis; L-histidine from 5-phospho-alpha-D-ribose 1-diphosphate: step 1/9. Catalyzes the condensation of ATP and 5-phosphoribose 1-diphosphate to form N'-(5'-phosphoribosyl)-ATP (PR-ATP). Has a crucial role in the pathway because the rate of histidine biosynthesis seems to be controlled primarily by regulation of HisG enzymatic activity. The chain is ATP phosphoribosyltransferase from Chromobacterium violaceum (strain ATCC 12472 / DSM 30191 / JCM 1249 / CCUG 213 / NBRC 12614 / NCIMB 9131 / NCTC 9757 / MK).